Consider the following 333-residue polypeptide: MIDITLPLTDIHRHLDGNIRAQTILDLGRQFNIALPAQTLETLIPHVQVTSTEPDLVSFLTKLDWGVKVLASLDACRRVAFENIEDAARNGLHYVELRFSPGYMAMAHQLPIAGVVEAVIDGVRDGCNTFGVEARLIGIMSRTFGEAACLQELDALLAHRENITALDLAGDELGFPGSLFLSHFNRARDAGWHITVHAGEAAGPESIWQAIRELGAERIGHGVKAVEDRALMDFLVQQRIGIESCLTSNIQTSTVASLADHPLKTFLEHGVLASLNTDDPAVQGVDIIHEYHVAAPAAGLSREQIRQAQINGLEIAFLSDGEKRALREKVAAA.

Zn(2+)-binding residues include His-12 and His-14. Substrate contacts are provided by His-14, Asp-16, and Gly-170. His-197 contacts Zn(2+). The active-site Proton donor is Glu-200. Zn(2+) is bound at residue Asp-278. Asp-279 contributes to the substrate binding site.

This sequence belongs to the metallo-dependent hydrolases superfamily. Adenosine and AMP deaminases family. Adenosine deaminase subfamily. Requires Zn(2+) as cofactor.

The enzyme catalyses adenosine + H2O + H(+) = inosine + NH4(+). It carries out the reaction 2'-deoxyadenosine + H2O + H(+) = 2'-deoxyinosine + NH4(+). Functionally, catalyzes the hydrolytic deamination of adenosine and 2-deoxyadenosine. The sequence is that of Adenosine deaminase from Salmonella enteritidis PT4 (strain P125109).